We begin with the raw amino-acid sequence, 210 residues long: MTGLFVTLEGPEGAGKSTNRDYLAERLRERGVEVQLTREPGGTPLAERIRELLLAPSDEPMAADTELLLMFAARAQHIAGVIRPALARGAVVLCDRFTDATYAYQGGGRGLPEARIAALESFVQGDLRPDLTLVFDLPVEIGLARAAARGRLDRFEQEDRRFFEAVRQTYLQRAAQAPQRYQVLDAGLPLAEVQAGLDRLLPNLLERLHG.

An ATP-binding site is contributed by 10–17; that stretch reads GPEGAGKS.

The protein belongs to the thymidylate kinase family.

The catalysed reaction is dTMP + ATP = dTDP + ADP. Its function is as follows. Phosphorylation of dTMP to form dTDP in both de novo and salvage pathways of dTTP synthesis. This chain is Thymidylate kinase, found in Pseudomonas paraeruginosa (strain DSM 24068 / PA7) (Pseudomonas aeruginosa (strain PA7)).